A 112-amino-acid polypeptide reads, in one-letter code: UPF0342 protein SSA_1465 (112 aa).

This sequence belongs to the UPF0342 family.

The chain is UPF0342 protein SSA_1465 from Streptococcus sanguinis (strain SK36).